The sequence spans 1114 residues: MMRHSSLRLIIGGLILLLFVLNVFSKEQGSHSHKRSHSAKRFSRDSNSARERRPNIILILTDDQDVELGSLNFMPRTLRLLRDGGAEFRHAYTTTPMCCPARSSLLTGMYVHNHMVFTNNDNCSSPQWQATHETRSYATYLSNAGYRTGYFGKYLNKYNGSYIPPGWREWGGLIMNSKYYNYSINLNGQKIKHGFDYAKDYYPDLIANDSIAFLRSSKQQNQRKPVLLTMSFPAPHGPEDSAPQYSHLFFNVTTHHTPSYDHAPNPDKQWILRVTEPMQPVHKRFTNLLMTKRLQTLQSVDVAVERVYNELKELGELDNTYIVYTSDHGYHLGQFGLIKGKSFPFEFDVRVPFLIRGPGIQASKVVNEIVLNVDLAPTFLDMGGVPTPQHMDGRSILPLLLSRNRAVRDNWPDSFLIESSGRRETAEQIAESRARLQIERRNMKLANSSLLEDFLEGAGESTTIVSSSSTAATLMSSTAQQPEDGEEEVETDNEEDDVDGDGAMDSSAAALEEDDLDDAAFEEGDEELDQEFQQNNDLPLAPYITKMMRLNSECSDPALLKNCLPGQKWKCVNEEGRWRKHKCKFHLQLEHQLAAMPRKQYQRNCACFTPDGVVYTKIRAPSAGLHRVNKRTHNGPGRRRNKREVFHTELPDEMEELLDLHQVVDQLVDHTHRSKRDLPASSNETIAQVIQQIQSTLEILELKFNEHELHASNSSGNSYERGEKYTKSGGHRCFVDATTAKVNCSNVIYDDEKTWRTSRTQIDMLIKLLKDKIGKLKEMKKQLRESNKQALAAGRRNDNRRRNDQSVLDSGAGPEFNMSYFTEISSTPRSNVVGQTEVFQGYGSASAFDSLEQTQSHRFTPRAECYCEPDVGENHADSKEMAREARRKLKEERQRKKERKRIKKARLEKECLSEKMNCFSHDNQHWRTAPLWNDSPFCFCMNANNNTYSCLRTINGTHNFLYCEFTTGLITFYNLTIDRFETINRAAGLTPGERSHMHDALDQLKSCRGRSCSIRRHQNHLEGGSSAPLLPINQVHRNNKRKHSPLAGAVGNYAFVGPRLDMEALPPIKRRKLSKYNRLTGSQQSHMKRRPWKQTPLQQSPRFLRTHSVTPAQA.

An N-terminal signal peptide occupies residues 1 to 25 (MMRHSSLRLIIGGLILLLFVLNVFS). Residues Asp-62, Asp-63, and Cys-98 each contribute to the Ca(2+) site. Catalysis depends on Cys-98, which acts as the Nucleophile. Cys-98 is modified (3-oxoalanine (Cys)). N-linked (GlcNAc...) asparagine glycans are attached at residues Asn-122, Asn-159, Asn-181, Asn-208, and Asn-251. Ca(2+) is bound by residues Asp-327 and His-328. N-linked (GlcNAc...) asparagine glycosylation is present at Asn-447. The segment covering 466-479 (SSSSTAATLMSSTA) has biased composition (low complexity). The segment at 466–504 (SSSSTAATLMSSTAQQPEDGEEEVETDNEEDDVDGDGAM) is disordered. Acidic residues predominate over residues 483-502 (EDGEEEVETDNEEDDVDGDG). Asn-683, Asn-713, and Asn-743 each carry an N-linked (GlcNAc...) asparagine glycan. A disordered region spans residues 781-812 (KQLRESNKQALAAGRRNDNRRRNDQSVLDSGA). A compositionally biased stretch (basic and acidic residues) spans 795–804 (RRNDNRRRND). A glycan (N-linked (GlcNAc...) asparagine) is linked at Asn-817. Residues 876-895 (ADSKEMAREARRKLKEERQR) show a composition bias toward basic and acidic residues. Residues 876-901 (ADSKEMAREARRKLKEERQRKKERKR) form a disordered region. Asn-945, Asn-955, and Asn-974 each carry an N-linked (GlcNAc...) asparagine glycan. A disordered region spans residues 1073 to 1114 (LSKYNRLTGSQQSHMKRRPWKQTPLQQSPRFLRTHSVTPAQA). The segment covering 1095–1114 (TPLQQSPRFLRTHSVTPAQA) has biased composition (polar residues).

The protein belongs to the sulfatase family. Requires Ca(2+) as cofactor. The conversion to 3-oxoalanine (also known as C-formylglycine, FGly), of a serine or cysteine residue in prokaryotes and of a cysteine residue in eukaryotes, is critical for catalytic activity.

It is found in the endoplasmic reticulum. It localises to the golgi apparatus. The protein resides in the golgi stack. Its subcellular location is the cell surface. In Drosophila melanogaster (Fruit fly), this protein is Extracellular sulfatase SULF-1 homolog (Sulf1).